The primary structure comprises 313 residues: Porphobilinogen deaminase (313 aa).

Cys242 bears the S-(dipyrrolylmethanemethyl)cysteine mark.

This sequence belongs to the HMBS family. In terms of assembly, monomer. Requires dipyrromethane as cofactor.

It carries out the reaction 4 porphobilinogen + H2O = hydroxymethylbilane + 4 NH4(+). Its pathway is porphyrin-containing compound metabolism; protoporphyrin-IX biosynthesis; coproporphyrinogen-III from 5-aminolevulinate: step 2/4. Tetrapolymerization of the monopyrrole PBG into the hydroxymethylbilane pre-uroporphyrinogen in several discrete steps. The chain is Porphobilinogen deaminase from Erwinia tasmaniensis (strain DSM 17950 / CFBP 7177 / CIP 109463 / NCPPB 4357 / Et1/99).